Consider the following 210-residue polypeptide: Thymidylate kinase (210 aa).

10 to 17 (GPEGAGKS) provides a ligand contact to ATP.

The protein belongs to the thymidylate kinase family.

The catalysed reaction is dTMP + ATP = dTDP + ADP. Phosphorylation of dTMP to form dTDP in both de novo and salvage pathways of dTTP synthesis. The sequence is that of Thymidylate kinase from Pseudomonas putida (strain ATCC 700007 / DSM 6899 / JCM 31910 / BCRC 17059 / LMG 24140 / F1).